A 245-amino-acid chain; its full sequence is Ribonuclease 3 (245 aa).

An RNase III domain is found at 19-148 (FKVFQEKIGI…FIGALYLDQG (130 aa)). Residue E61 participates in Mg(2+) binding. Residue D65 is part of the active site. Residues D134 and E137 each coordinate Mg(2+). E137 is an active-site residue. The DRBM domain occupies 174–243 (DYKSQLQELI…AAEALKKLKE (70 aa)).

This sequence belongs to the ribonuclease III family. As to quaternary structure, homodimer. Requires Mg(2+) as cofactor.

The protein resides in the cytoplasm. The catalysed reaction is Endonucleolytic cleavage to 5'-phosphomonoester.. In terms of biological role, digests double-stranded RNA. Involved in the processing of primary rRNA transcript to yield the immediate precursors to the large and small rRNAs (23S and 16S). Processes some mRNAs, and tRNAs when they are encoded in the rRNA operon. Processes pre-crRNA and tracrRNA of type II CRISPR loci if present in the organism. The polypeptide is Ribonuclease 3 (Bacillus cereus (strain ATCC 14579 / DSM 31 / CCUG 7414 / JCM 2152 / NBRC 15305 / NCIMB 9373 / NCTC 2599 / NRRL B-3711)).